The sequence spans 312 residues: Olfactory receptor 6C68 (312 aa).

Residues 1–23 (MRKHTAITTFILLGLTEDPQLQV) are Extracellular-facing. Residues 24-44 (LLFMFLFITYMLSVTGKLTII) traverse the membrane as a helical segment. Over 45–55 (ALTMLDPHLKT) the chain is Cytoplasmic. Residues 56–76 (PMYFFLQNLSFLEISFTATCV) traverse the membrane as a helical segment. The Extracellular portion of the chain corresponds to 77-95 (PRFLYSISTGNKIITYNAC). Residues Cys-95 and Cys-177 are joined by a disulfide bond. The chain crosses the membrane as a helical span at residues 96-116 (VIQLFFADLFGVTEFFLLATM). Residues 117 to 143 (SYDRYVAICKPLHYMAIMSNKVCKTMV) are Cytoplasmic-facing. A helical transmembrane segment spans residues 144–164 (ICCWMAALMIILPPLSLGFHL). Over 165–197 (EFCDSNVINHFGCDALPILKIPCSDTSLIEQMV) the chain is Extracellular. A helical transmembrane segment spans residues 198–218 (VASAVLTFIITLVCVVLSYTY). Residues 219–239 (IIRTILKFPSVQQKKKAFSTC) lie on the Cytoplasmic side of the membrane. The helical transmembrane segment at 240–260 (SSHITVVSITYGSCIFIYIKP) threads the bilayer. The Extracellular segment spans residues 261-271 (SAKEEVNINKG). The helical transmembrane segment at 272 to 292 (VSVLISSISPMLNSFIYTLRN) threads the bilayer. The Cytoplasmic portion of the chain corresponds to 293-312 (EQVKQAFHDSLKKIAFRLKK).

Belongs to the G-protein coupled receptor 1 family.

The protein localises to the cell membrane. Functionally, odorant receptor. In Homo sapiens (Human), this protein is Olfactory receptor 6C68 (OR6C68).